Reading from the N-terminus, the 530-residue chain is Nectin-2 (530 aa).

An N-terminal signal peptide occupies residues 1 to 31 (MARAAVLPPSRLSPTLPLLPLLLLLLQETGA). One can recognise an Ig-like V-type domain in the interval 32 to 147 (QDVRVRVLPE…NGTRRGVTWL (116 aa)). Topologically, residues 32–351 (QDVRVRVLPE…STAGAGATGG (320 aa)) are extracellular. Cys54 and Cys131 are joined by a disulfide. N-linked (GlcNAc...) asparagine glycosylation is found at Asn128 and Asn138. Ig-like C2-type domains lie at 153-247 (PENH…VTLS) and 252-337 (PEVS…VILV). 2 disulfides stabilise this stretch: Cys174/Cys229 and Cys274/Cys320. Asn315 is a glycosylation site (N-linked (GlcNAc...) asparagine). Residues 352–372 (IIGGIIAAIIATAVAGTGILI) form a helical membrane-spanning segment. Residues 373 to 530 (CRQQRKEQRL…DFFVSRAMYV (158 aa)) lie on the Cytoplasmic side of the membrane. A disordered region spans residues 382–407 (LQAADEEEELEGPPSYKPPTPKAKLE). Residue Thr401 is modified to Phosphothreonine. Ser424 carries the post-translational modification Phosphoserine.

It belongs to the nectin family. Can form trans-heterodimers with NECTIN3. Interacts with CD226 or with PVRIG; these interactions are competitive and have a differential functional outcome on T-cell activation, either positive or negative, respectively. Binds with low affinity to TIGIT. As to expression, brain, spinal cord, spleen, kidney, heart and liver.

It localises to the cell membrane. Modulator of T-cell signaling. Can be either a costimulator of T-cell function, or a coinhibitor, depending on the receptor it binds to. Upon binding to CD226, stimulates T-cell proliferation and cytokine production, including that of IL2, IL5, IL10, IL13, and IFNG. Upon interaction with PVRIG, inhibits T-cell proliferation. These interactions are competitive. Probable cell adhesion protein. This Mus musculus (Mouse) protein is Nectin-2.